The following is a 466-amino-acid chain: ATP synthase subunit beta (466 aa).

An ATP-binding site is contributed by 152 to 159 (GGAGVGKT).

It belongs to the ATPase alpha/beta chains family. F-type ATPases have 2 components, CF(1) - the catalytic core - and CF(0) - the membrane proton channel. CF(1) has five subunits: alpha(3), beta(3), gamma(1), delta(1), epsilon(1). CF(0) has three main subunits: a(1), b(2) and c(9-12). The alpha and beta chains form an alternating ring which encloses part of the gamma chain. CF(1) is attached to CF(0) by a central stalk formed by the gamma and epsilon chains, while a peripheral stalk is formed by the delta and b chains.

It localises to the cell inner membrane. The catalysed reaction is ATP + H2O + 4 H(+)(in) = ADP + phosphate + 5 H(+)(out). In terms of biological role, produces ATP from ADP in the presence of a proton gradient across the membrane. The catalytic sites are hosted primarily by the beta subunits. The chain is ATP synthase subunit beta from Helicobacter pylori (strain HPAG1).